The primary structure comprises 162 residues: Hydrogenase-2 operon protein HybE (162 aa).

Belongs to the HupJ family.

The polypeptide is Hydrogenase-2 operon protein HybE (hybE) (Escherichia coli O6:H1 (strain CFT073 / ATCC 700928 / UPEC)).